The sequence spans 348 residues: LRP2-binding protein (348 aa).

Residues 60–93 form a TPR repeat; sequence TLAYFLRGQLYFEEGWYEEALEQFEEIEEKDHQA. Sel1-like repeat units lie at residues 94–126, 134–169, 174–207, 208–243, 244–278, and 298–333; these read TYQL…DSPC, FAAA…DNGN, VKAQ…GNGN, LESQ…ERGN, VYAQ…EVHD, and AMAS…RLNP.

In terms of assembly, interacts with LRP2.

The protein localises to the cytoplasm. Functionally, may act as an adapter that regulates LRP2 function. This chain is LRP2-binding protein (LRP2BP), found in Macaca fascicularis (Crab-eating macaque).